The primary structure comprises 391 residues: Phosphoprotein (391 aa).

3 positions are modified to phosphothreonine: T10, T16, and T39. S69 bears the Phosphoserine mark. Disordered stretches follow at residues 82–101 (SSSE…FAQT) and 143–208 (PRTS…PANV). Phosphothreonine occurs at positions 91, 150, and 165. Residue S188 is modified to Phosphoserine. Residues 198 to 208 (LPQQDSTPANV) show a composition bias toward polar residues. A coiled-coil region spans residues 218-245 (ANEIMDLLRGMDARLQHLEQKVDKVLAQ). The residue at position 250 (T250) is a Phosphothreonine. A Phosphoserine modification is found at S257. T258 and T282 each carry phosphothreonine. Phosphoserine is present on residues S292 and S294. T298 carries the phosphothreonine modification. S301 and S374 each carry phosphoserine. The tract at residues 343–391 (AGRKVMITKMITDCVANPQMKQAFEQRLAKASTEDALNDIKRDIIRSAI) is interaction with the nucleoprotein. The tract at residues 348–391 (MITKMITDCVANPQMKQAFEQRLAKASTEDALNDIKRDIIRSAI) is x domain (XD). The residue at position 375 (T375) is a Phosphothreonine.

This sequence belongs to the rubulavirus/avulavirus P protein family. In terms of assembly, homotetramer. Interacts (via multimerization domain) with polymerase L; this interaction forms the polymerase L-P complex. Interacts (via N-terminus) with N0 (via Ncore); this interaction allows P to chaperon N0 to avoid N polymerization before encapsidation. Interacts (via C-terminus) with N-RNA template; this interaction positions the polymerase on the template for both transcription and replication. Interacts with host RPS6KB1 kinase; this interaction may play a role in the viral replication and transcription.

It is found in the virion. Its function is as follows. Essential cofactor of the RNA polymerase L that plays a central role in the transcription and replication by forming the polymerase complex with RNA polymerase L and recruiting L to the genomic N-RNA template for RNA synthesis. Also plays a central role in the encapsidation of nascent RNA chains by forming the encapsidation complex with the nucleocapsid protein N (N-P complex). Acts as a chaperone for newly synthesized free N protein, so-called N0, allowing encapsidation of nascent RNA chains during replication. The nucleoprotein protein N prevents excessive phosphorylation of P, which leads to down-regulation of viral transcription/ replication. Participates, together with N, in the formation of viral factories (viroplasms), which are large inclusions in the host cytoplasm where replication takes place. In Mumps orthorubulavirus (MuV), this protein is Phosphoprotein (V/P).